A 62-amino-acid polypeptide reads, in one-letter code: Temporin-HN1 (62 aa).

An N-terminal signal peptide occupies residues 1–22 (MFTLKKSLLLLLFLGTINLSLS). A propeptide spanning residues 23-44 (EQERNAEEERRDDPEEMDAEVE) is cleaved from the precursor. A Leucine amide modification is found at Leu60.

In terms of tissue distribution, expressed by the skin glands.

It localises to the secreted. Its function is as follows. Has antimicrobial activity against some Gram-positive bacteria and fungi but has no activity against a range of Gram-negative bacteria except P.faecalis. Active against the Gram-positive bacteria S.aureus ATCC 25923 (MIC=37.5 uM), S.carnosus KHS (MIC=37.5 uM), B.licheniformis X39 (MIC=19 uM), R.rhodochrous X15 (MIC=4.8 uM), is virtually inactive against E.faecalis 981 (MIC=150 uM) and inactive against E.faecium 091299. Has some antimicrobial activity against the Gram-negative bacterium P.faecalis X29 (MIC=75 uM) and is inactive against E.coli, P.aeruginosa and S.typhi. Has antifungal activity against C.albicans ATCC 2002 (MIC=19 uM) and lower activity against the slime mold 090223 (MIC=75 uM). Has low hemolytic activity against human erythrocytes (LC(50)=75 uM). The protein is Temporin-HN1 of Odorrana hainanensis (Odor frog).